Consider the following 198-residue polypeptide: Inosine triphosphate pyrophosphatase (198 aa).

Ala2 carries the N-acetylalanine modification. Residue 14–19 (TGNAKK) coordinates ITP. Residue Glu44 participates in Mg(2+) binding. ITP is bound by residues Lys56, 72–73 (DT), and Lys89. Ser146 carries the post-translational modification Phosphoserine. ITP contacts are provided by residues 149–152 (FGWD), Lys172, and 177–178 (HR).

Belongs to the HAM1 NTPase family. In terms of assembly, homodimer. Mg(2+) is required as a cofactor. Mn(2+) serves as cofactor.

It localises to the cytoplasm. The enzyme catalyses ITP + H2O = IMP + diphosphate + H(+). It catalyses the reaction dITP + H2O = dIMP + diphosphate + H(+). It carries out the reaction XTP + H2O = XMP + diphosphate + H(+). The catalysed reaction is N(6)-hydroxy-dATP + H2O = N(6)-hydroxy-dAMP + diphosphate + H(+). Its function is as follows. Pyrophosphatase that hydrolyzes the non-canonical purine nucleotides inosine triphosphate (ITP), deoxyinosine triphosphate (dITP) as well as 2'-deoxy-N-6-hydroxylaminopurine triphosphate (dHAPTP) and xanthosine 5'-triphosphate (XTP) to their respective monophosphate derivatives. The enzyme does not distinguish between the deoxy- and ribose forms. Probably excludes non-canonical purines from RNA and DNA precursor pools, thus preventing their incorporation into RNA and DNA and avoiding chromosomal lesions. In Rattus norvegicus (Rat), this protein is Inosine triphosphate pyrophosphatase (Itpa).